Consider the following 355-residue polypeptide: Peptide chain release factor 1 (355 aa).

At Gln230 the chain carries N5-methylglutamine.

The protein belongs to the prokaryotic/mitochondrial release factor family. Post-translationally, methylated by PrmC. Methylation increases the termination efficiency of RF1.

It is found in the cytoplasm. Its function is as follows. Peptide chain release factor 1 directs the termination of translation in response to the peptide chain termination codons UAG and UAA. The polypeptide is Peptide chain release factor 1 (Geotalea uraniireducens (strain Rf4) (Geobacter uraniireducens)).